We begin with the raw amino-acid sequence, 37 residues long: Large ribosomal subunit protein bL36 (37 aa).

It belongs to the bacterial ribosomal protein bL36 family.

This chain is Large ribosomal subunit protein bL36, found in Syntrophomonas wolfei subsp. wolfei (strain DSM 2245B / Goettingen).